A 297-amino-acid polypeptide reads, in one-letter code: Bifunctional protein FolD (297 aa).

Residues 167 to 169 and I233 contribute to the NADP(+) site; that span reads GRS.

Belongs to the tetrahydrofolate dehydrogenase/cyclohydrolase family. Homodimer.

The enzyme catalyses (6R)-5,10-methylene-5,6,7,8-tetrahydrofolate + NADP(+) = (6R)-5,10-methenyltetrahydrofolate + NADPH. It catalyses the reaction (6R)-5,10-methenyltetrahydrofolate + H2O = (6R)-10-formyltetrahydrofolate + H(+). It functions in the pathway one-carbon metabolism; tetrahydrofolate interconversion. In terms of biological role, catalyzes the oxidation of 5,10-methylenetetrahydrofolate to 5,10-methenyltetrahydrofolate and then the hydrolysis of 5,10-methenyltetrahydrofolate to 10-formyltetrahydrofolate. The sequence is that of Bifunctional protein FolD from Zymomonas mobilis subsp. mobilis (strain ATCC 31821 / ZM4 / CP4).